Here is a 195-residue protein sequence, read N- to C-terminus: Segregation and condensation protein B (195 aa).

The segment at 169–195 (LEDVAASQENSREAGGRGSIPGHPGEE) is disordered.

This sequence belongs to the ScpB family. In terms of assembly, homodimer. Homodimerization may be required to stabilize the binding of ScpA to the Smc head domains. Component of a cohesin-like complex composed of ScpA, ScpB and the Smc homodimer, in which ScpA and ScpB bind to the head domain of Smc. The presence of the three proteins is required for the association of the complex with DNA.

The protein resides in the cytoplasm. Functionally, participates in chromosomal partition during cell division. May act via the formation of a condensin-like complex containing Smc and ScpA that pull DNA away from mid-cell into both cell halves. This chain is Segregation and condensation protein B, found in Moorella thermoacetica (strain ATCC 39073 / JCM 9320).